The sequence spans 640 residues: 1,4-alpha-glucan branching enzyme GlgB (640 aa).

The Nucleophile role is filled by Asp318. Glu371 acts as the Proton donor in catalysis.

Belongs to the glycosyl hydrolase 13 family. GlgB subfamily. In terms of assembly, monomer.

The catalysed reaction is Transfers a segment of a (1-&gt;4)-alpha-D-glucan chain to a primary hydroxy group in a similar glucan chain.. It participates in glycan biosynthesis; glycogen biosynthesis. Catalyzes the formation of the alpha-1,6-glucosidic linkages in glycogen by scission of a 1,4-alpha-linked oligosaccharide from growing alpha-1,4-glucan chains and the subsequent attachment of the oligosaccharide to the alpha-1,6 position. The protein is 1,4-alpha-glucan branching enzyme GlgB of Francisella tularensis subsp. holarctica (strain FTNF002-00 / FTA).